The sequence spans 211 residues: uncharacterized protein (211 aa).

This sequence belongs to the A.longa ORF167/ORF288 family.

The protein resides in the plastid. This is an uncharacterized protein from Euglena longa (Euglenophycean alga).